The primary structure comprises 409 residues: Elongation factor Tu, chloroplastic (409 aa).

The tr-type G domain maps to 10–214 (KPHINIGTIG…AVDAYIPTPE (205 aa)). The G1 stretch occupies residues 19–26 (GHVDHGKT). 19–26 (GHVDHGKT) is a GTP binding site. Mg(2+) is bound at residue T26. The segment at 60–64 (GITIN) is G2. The tract at residues 81 to 84 (DCPG) is G3. GTP contacts are provided by residues 81–85 (DCPGH) and 136–139 (NKQD). The interval 136-139 (NKQD) is G4. Residues 174 to 176 (SRL) are G5.

The protein belongs to the TRAFAC class translation factor GTPase superfamily. Classic translation factor GTPase family. EF-Tu/EF-1A subfamily.

The protein localises to the plastid. The protein resides in the chloroplast. The enzyme catalyses GTP + H2O = GDP + phosphate + H(+). In terms of biological role, GTP hydrolase that promotes the GTP-dependent binding of aminoacyl-tRNA to the A-site of ribosomes during protein biosynthesis. The protein is Elongation factor Tu, chloroplastic (tufA) of Stephanocyclus meneghinianus (Diatom).